We begin with the raw amino-acid sequence, 357 residues long: Beta-hexosaminidase (357 aa).

Substrate is bound by residues aspartate 66, arginine 74, arginine 140, and 170 to 171 (KH). Catalysis depends on histidine 183, which acts as the Proton donor/acceptor. The active-site Nucleophile is aspartate 254.

It belongs to the glycosyl hydrolase 3 family. NagZ subfamily.

It localises to the cytoplasm. It carries out the reaction Hydrolysis of terminal non-reducing N-acetyl-D-hexosamine residues in N-acetyl-beta-D-hexosaminides.. It functions in the pathway cell wall biogenesis; peptidoglycan recycling. Functionally, plays a role in peptidoglycan recycling by cleaving the terminal beta-1,4-linked N-acetylglucosamine (GlcNAc) from peptide-linked peptidoglycan fragments, giving rise to free GlcNAc, anhydro-N-acetylmuramic acid and anhydro-N-acetylmuramic acid-linked peptides. The protein is Beta-hexosaminidase of Chromobacterium violaceum (strain ATCC 12472 / DSM 30191 / JCM 1249 / CCUG 213 / NBRC 12614 / NCIMB 9131 / NCTC 9757 / MK).